The primary structure comprises 180 residues: UPF0227 protein VV2369 (180 aa).

The protein belongs to the UPF0227 family.

This chain is UPF0227 protein VV2369, found in Vibrio vulnificus (strain YJ016).